A 348-amino-acid polypeptide reads, in one-letter code: Matrix protein (348 aa).

A YLDL motif motif is present at residues 50–53; that stretch reads YLDL. S70 is modified (phosphoserine; by host).

Belongs to the morbillivirus/respirovirus/rubulavirus M protein family. Homomultimer. Binds to the cytoplasmic regions of F and HN proteins. Interacts with nucleocapsid. Interacts with human alpha-tubulin and beta-tubulin. Interacts with host ANP32B. In terms of processing, a large portion is phosphorylated in the cytoplasm, but not in virion. However, this phosphorylation is not essential for virus replication.

It is found in the virion. It localises to the host cytoplasm. Its subcellular location is the host cell membrane. In terms of biological role, acts as a negative regulator for transcription and replication by sticking to the nucleocapsid. This effect might be regulated by the cytoplasmic interaction with tubulin that dissociates the M protein from the nucleocapsid. Plays a crucial role in virion assembly and budding. Forms a shell at the inner face of the plasma membrane and concentrates the HN and F glycoproteins. This is Matrix protein (M) from Sendai virus (strain Harris) (SeV).